The sequence spans 424 residues: Ornithine aminotransferase (424 aa).

K272 bears the N6-(pyridoxal phosphate)lysine mark. K390 is covalently cross-linked (Glycyl lysine isopeptide (Lys-Gly) (interchain with G-Cter in ubiquitin)).

The protein belongs to the class-III pyridoxal-phosphate-dependent aminotransferase family. Pyridoxal 5'-phosphate is required as a cofactor.

It is found in the cytoplasm. The catalysed reaction is a 2-oxocarboxylate + L-ornithine = L-glutamate 5-semialdehyde + an L-alpha-amino acid. Its pathway is amino-acid biosynthesis; L-proline biosynthesis; L-glutamate 5-semialdehyde from L-ornithine: step 1/1. By arginine and urea. Functionally, catalyzes the transamination of ornithine into L-glutamate gamma-semialdehyde, the second step of arginine degradation. The sequence is that of Ornithine aminotransferase (CAR2) from Saccharomyces cerevisiae (strain ATCC 204508 / S288c) (Baker's yeast).